Here is a 110-residue protein sequence, read N- to C-terminus: Large ribosomal subunit protein uL22 (110 aa).

The protein belongs to the universal ribosomal protein uL22 family. Part of the 50S ribosomal subunit.

This protein binds specifically to 23S rRNA; its binding is stimulated by other ribosomal proteins, e.g. L4, L17, and L20. It is important during the early stages of 50S assembly. It makes multiple contacts with different domains of the 23S rRNA in the assembled 50S subunit and ribosome. Its function is as follows. The globular domain of the protein is located near the polypeptide exit tunnel on the outside of the subunit, while an extended beta-hairpin is found that lines the wall of the exit tunnel in the center of the 70S ribosome. This Shewanella halifaxensis (strain HAW-EB4) protein is Large ribosomal subunit protein uL22.